The following is a 332-amino-acid chain: Sesquiterpene synthase MBR_10393 (332 aa).

Mg(2+) is bound by residues D91 and D96. Positions 91–96 match the DDXXXD motif motif; sequence DDLFVD. Position 184 (R184) interacts with substrate. Positions 230, 234, and 238 each coordinate Mg(2+).

This sequence belongs to the terpene synthase family. Mg(2+) is required as a cofactor.

The catalysed reaction is (2E,6E)-farnesyl diphosphate + H2O = (+)-corvol ether B + diphosphate. The enzyme catalyses (2E,6E)-farnesyl diphosphate + H2O = (+)-corvol ether A + diphosphate. Its function is as follows. Terpene synthase that catalyzes the conversion of (2E,6E)-farnesyl diphosphate (FPP) into sesquiterpenes which are important for fungi-environment interactions. Produces a mixture consisting of 8 sesquiterpenes including corvol ethers A and B, as well as traces of epizonarene, gamma-cadinene, delta-cadinene, alpha-cadinene, alpha-cadinol, and an unidentified sesquiterpene. The major product is corvol ether B. This chain is Sesquiterpene synthase MBR_10393, found in Metarhizium brunneum (strain ARSEF 3297).